Consider the following 205-residue polypeptide: Holliday junction branch migration complex subunit RuvA (205 aa).

The tract at residues 1-62 is domain I; it reads MFEYVTGYVE…EDIMALYGFK (62 aa). Residues 63 to 141 are domain II; it reads TREERLLFTK…DVVPDAFVDL (79 aa). The flexible linker stretch occupies residues 142-152; it reads FSDEERFDEKK. The segment at 153 to 205 is domain III; it reads GSSAELDEALEALRALGYAEREVSRVVPELLKESLTTDQYIKKALSLLLNGKR.

It belongs to the RuvA family. In terms of assembly, homotetramer. Forms an RuvA(8)-RuvB(12)-Holliday junction (HJ) complex. HJ DNA is sandwiched between 2 RuvA tetramers; dsDNA enters through RuvA and exits via RuvB. An RuvB hexamer assembles on each DNA strand where it exits the tetramer. Each RuvB hexamer is contacted by two RuvA subunits (via domain III) on 2 adjacent RuvB subunits; this complex drives branch migration. In the full resolvosome a probable DNA-RuvA(4)-RuvB(12)-RuvC(2) complex forms which resolves the HJ.

It is found in the cytoplasm. Functionally, the RuvA-RuvB-RuvC complex processes Holliday junction (HJ) DNA during genetic recombination and DNA repair, while the RuvA-RuvB complex plays an important role in the rescue of blocked DNA replication forks via replication fork reversal (RFR). RuvA specifically binds to HJ cruciform DNA, conferring on it an open structure. The RuvB hexamer acts as an ATP-dependent pump, pulling dsDNA into and through the RuvAB complex. HJ branch migration allows RuvC to scan DNA until it finds its consensus sequence, where it cleaves and resolves the cruciform DNA. This Bacillus cereus (strain AH187) protein is Holliday junction branch migration complex subunit RuvA.